Reading from the N-terminus, the 404-residue chain is Aspartokinase 1 (404 aa).

7-10 (KFGG) is a binding site for ATP. 25–30 (HIKEAI) contributes to the substrate binding site. Ser41 is a binding site for ATP. Residues 52–54 (TDS), Glu79, 130–131 (LA), 155–158 (RGGS), and Ser158 each bind substrate. Residues 178 to 179 (TD) and 184 to 189 (MTADPR) contribute to the ATP site. Residues 299-301 (SVD), 355-356 (VT), 369-370 (PI), and 376-377 (SH) contribute to the substrate site. In terms of domain architecture, ACT spans 344–404 (AVGAGIMGVP…ALHEVFELSK (61 aa)).

Belongs to the aspartokinase family. Tetramer consisting of 2 isoforms Alpha (catalytic) and 2 isoforms Beta (function not known).

The enzyme catalyses L-aspartate + ATP = 4-phospho-L-aspartate + ADP. Its pathway is amino-acid biosynthesis; L-lysine biosynthesis via DAP pathway; (S)-tetrahydrodipicolinate from L-aspartate: step 1/4. The protein operates within amino-acid biosynthesis; L-methionine biosynthesis via de novo pathway; L-homoserine from L-aspartate: step 1/3. It functions in the pathway amino-acid biosynthesis; L-threonine biosynthesis; L-threonine from L-aspartate: step 1/5. With respect to regulation, diaminopimelate-sensitive. Functionally, catalyzes the phosphorylation of the beta-carboxyl group of aspartic acid with ATP to yield 4-phospho-L-aspartate, which is involved in the branched biosynthetic pathway leading to the biosynthesis of amino acids threonine, isoleucine and methionine. In Bacillus subtilis (strain 168), this protein is Aspartokinase 1 (dapG).